The chain runs to 346 residues: N-acetyl-gamma-glutamyl-phosphate reductase (346 aa).

Cys-149 is a catalytic residue.

It belongs to the NAGSA dehydrogenase family. Type 1 subfamily.

It localises to the cytoplasm. It catalyses the reaction N-acetyl-L-glutamate 5-semialdehyde + phosphate + NADP(+) = N-acetyl-L-glutamyl 5-phosphate + NADPH + H(+). It functions in the pathway amino-acid biosynthesis; L-arginine biosynthesis; N(2)-acetyl-L-ornithine from L-glutamate: step 3/4. Functionally, catalyzes the NADPH-dependent reduction of N-acetyl-5-glutamyl phosphate to yield N-acetyl-L-glutamate 5-semialdehyde. The chain is N-acetyl-gamma-glutamyl-phosphate reductase from Saccharophagus degradans (strain 2-40 / ATCC 43961 / DSM 17024).